The chain runs to 218 residues: uncharacterized protein (218 aa).

The transit peptide at 1–28 (MLSLQCLPPFFISVPNRSTNSCSTAPLR) directs the protein to the chloroplast.

It belongs to the SixA phosphatase family.

Its subcellular location is the plastid. The protein resides in the chloroplast. This is an uncharacterized protein from Arabidopsis thaliana (Mouse-ear cress).